An 89-amino-acid polypeptide reads, in one-letter code: Small ribosomal subunit protein uS15 (89 aa).

This sequence belongs to the universal ribosomal protein uS15 family. In terms of assembly, part of the 30S ribosomal subunit. Forms a bridge to the 50S subunit in the 70S ribosome, contacting the 23S rRNA.

One of the primary rRNA binding proteins, it binds directly to 16S rRNA where it helps nucleate assembly of the platform of the 30S subunit by binding and bridging several RNA helices of the 16S rRNA. Its function is as follows. Forms an intersubunit bridge (bridge B4) with the 23S rRNA of the 50S subunit in the ribosome. This Burkholderia ambifaria (strain MC40-6) protein is Small ribosomal subunit protein uS15.